Reading from the N-terminus, the 87-residue chain is Toxin Cll5b (87 aa).

A signal peptide spans 1-19 (MNSLLMITACLAEIGTVWA). Residues 20 to 85 (KEGYLVNKST…TYPLPNKSCS (66 aa)) enclose the LCN-type CS-alpha/beta domain. Disulfide bonds link Cys31/Cys84, Cys35/Cys60, Cys44/Cys65, and Cys48/Cys67. Residues 86–87 (KK) constitute a propeptide, removed by a carboxypeptidase.

The protein belongs to the long (4 C-C) scorpion toxin superfamily. Sodium channel inhibitor family. Beta subfamily. Expressed by the venom gland.

It localises to the secreted. Beta toxins bind voltage-independently at site-4 of sodium channels (Nav) and shift the voltage of activation toward more negative potentials thereby affecting sodium channel activation and promoting spontaneous and repetitive firing. This chain is Toxin Cll5b, found in Centruroides limpidus (Mexican scorpion).